A 201-amino-acid polypeptide reads, in one-letter code: MKLPKGVKNPVFYGQQPEKKVPMSSGHEIKQTPVVLAMLKGPGPAKYLRPSCTGYIDHDVSMFQEPAYTLHAWHPEKRIMDIRSPGPCYFLDPKITRFGMASCPQVPMAEHISNLPWPPWTRTGSTRICQEAPDRPHTPGQSRPSIRTAALSIAWPNALATRWTTHLGLAPAPTMSSRSGHTSPARLLSPWASSTRPTYAR.

The STPGR repeat unit spans residues 171-186; the sequence is PAPTMSSRSGHTSPAR. Positions 172 to 201 are disordered; it reads APTMSSRSGHTSPARLLSPWASSTRPTYAR. Over residues 191 to 201 the composition is skewed to polar residues; sequence WASSTRPTYAR.

It belongs to the CIMAP family.

The protein is Protein CIMAP1C (CIMAP1C) of Bos taurus (Bovine).